Here is a 379-residue protein sequence, read N- to C-terminus: Very late expression factor 1 (379 aa).

The 180-residue stretch at 169 to 348 (VIDTILNFIN…YNIGLDETSS (180 aa)) folds into the Tyr recombinase domain. Catalysis depends on residues arginine 210, lysine 239, arginine 303, and histidine 326. Tyrosine 335 (O-(3'-phospho-DNA)-tyrosine intermediate) is an active-site residue. The segment covering 346–358 (TSSEEENNNDDDD) has biased composition (acidic residues). Residues 346–379 (TSSEEENNNDDDDAQHNRNSSGSSGESLLYYRNE) form a disordered region. Residues 362 to 379 (NRNSSGSSGESLLYYRNE) show a composition bias toward low complexity.

The protein belongs to the 'phage' integrase family.

In terms of biological role, plays a role in nucleocapsid assembly and serves an essential function during the final stages of the DNA packaging process. Participates in the processing of branched DNA molecules at the late stages of viral genome replication. In Lepidoptera (butterflies and moths), this protein is Very late expression factor 1 (VLF-1).